The primary structure comprises 448 residues: Senescence/dehydration-associated protein At4g35985, chloroplastic (448 aa).

The disordered stretch occupies residues 1–36 (MECSATPPKLYPTVDTSTTVAPLPKSSSSSSSTNNN). A chloroplast-targeting transit peptide spans 1 to 56 (MECSATPPKLYPTVDTSTTVAPLPKSSSSSSSTNNNNLYPSINVNDLVNNIFPDPT). Over residues 26–36 (SSSSSSSTNNN) the composition is skewed to low complexity. The Senescence domain maps to 248 to 416 (IAAGSGQLIK…AWTVFKIRQA (169 aa)). Residues 422–448 (AMKPSSLAKTVVKTAAKERKKGKKSSK) are disordered. The segment covering 439–448 (ERKKGKKSSK) has biased composition (basic residues).

Expressed in leaves (especially in midribs and trichomes), apical meristemic regions, stems, roots and flowers.

It is found in the plastid. It localises to the chloroplast. The sequence is that of Senescence/dehydration-associated protein At4g35985, chloroplastic from Arabidopsis thaliana (Mouse-ear cress).